Here is a 484-residue protein sequence, read N- to C-terminus: NADH-quinone oxidoreductase subunit N (484 aa).

A run of 14 helical transmembrane segments spans residues 11–31 (SLWIALPEIFLLSAIVIVLLI), 42–62 (VTYYLIQLSLFITGLLAFNLI), 79–98 (MASVFKVFMMAATMVAMVYS), 113–133 (FVLVLLSVLGMMVMVSGYSLL), 134–154 (TLYLGLEILSLSLYALIAIAR), 167–187 (FVLGAIASGLLLYGMSMIYGI), 211–231 (LIINFGLVFLVIGIAFKLGAV), 248–268 (VTLFISTVPKIAAFAMLVRIL), 279–299 (WSDLFMVLSILSIALGSVVAL), 313–333 (ISHVGFIMLGFVAGTPIGYGA), 335–355 (AFYMLVYVLMSLAAFGMIILL), 378–398 (FALMMLIIILSMAGVPPLVGF), 408–428 (VVSAGFITIAVIVVIFAVISA), and 457–477 (LVLSINAILILAVGLFPDFWM).

Belongs to the complex I subunit 2 family. As to quaternary structure, NDH-1 is composed of 14 different subunits. Subunits NuoA, H, J, K, L, M, N constitute the membrane sector of the complex.

It is found in the cell inner membrane. It carries out the reaction a quinone + NADH + 5 H(+)(in) = a quinol + NAD(+) + 4 H(+)(out). Functionally, NDH-1 shuttles electrons from NADH, via FMN and iron-sulfur (Fe-S) centers, to quinones in the respiratory chain. The immediate electron acceptor for the enzyme in this species is believed to be ubiquinone. Couples the redox reaction to proton translocation (for every two electrons transferred, four hydrogen ions are translocated across the cytoplasmic membrane), and thus conserves the redox energy in a proton gradient. The protein is NADH-quinone oxidoreductase subunit N of Ruthia magnifica subsp. Calyptogena magnifica.